A 212-amino-acid chain; its full sequence is Uridine kinase (212 aa).

12 to 19 (GGSGGGKT) provides a ligand contact to ATP.

It belongs to the uridine kinase family.

The protein resides in the cytoplasm. It catalyses the reaction uridine + ATP = UMP + ADP + H(+). It carries out the reaction cytidine + ATP = CMP + ADP + H(+). It participates in pyrimidine metabolism; CTP biosynthesis via salvage pathway; CTP from cytidine: step 1/3. The protein operates within pyrimidine metabolism; UMP biosynthesis via salvage pathway; UMP from uridine: step 1/1. The sequence is that of Uridine kinase from Streptococcus pneumoniae serotype 19F (strain G54).